The primary structure comprises 498 residues: Glutathione synthetase large chain (498 aa).

A substrate-binding site is contributed by R128. Residue E146 coordinates ATP. E146 and N148 together coordinate Mg(2+). Substrate is bound by residues 150–153 (ISVS), 233–235 (ERN), Q239, and 291–294 (RVGY). K330 contacts ATP. S356 carries the post-translational modification Phosphoserine. Residues 387 to 396 (KPQREGGGNN), Y398, 420 to 423 (MRYI), and E446 each bind ATP. E391 contacts Mg(2+). Residue R473 participates in substrate binding. 2 residues coordinate ATP: K475 and E481. 484-485 (VA) is a substrate binding site.

The protein belongs to the eukaryotic GSH synthase family. In terms of assembly, heterodimer composed of a large and a small chain. The cofactor is Mg(2+).

The catalysed reaction is gamma-L-glutamyl-L-cysteine + glycine + ATP = glutathione + ADP + phosphate + H(+). It participates in sulfur metabolism; glutathione biosynthesis; glutathione from L-cysteine and L-glutamate: step 2/2. This is Glutathione synthetase large chain (gsa1) from Schizosaccharomyces pombe (strain 972 / ATCC 24843) (Fission yeast).